We begin with the raw amino-acid sequence, 404 residues long: Formate-dependent phosphoribosylglycinamide formyltransferase (404 aa).

N(1)-(5-phospho-beta-D-ribosyl)glycinamide contacts are provided by residues Glu27–Leu28 and Glu87. ATP contacts are provided by residues Arg120, Lys162, Ser167–Gln172, Glu202–Ile205, and Glu210. The ATP-grasp domain maps to Arg125 to Leu320. Positions 279 and 291 each coordinate Mg(2+). Residues Asp298, Lys367, and Arg374–Arg375 contribute to the N(1)-(5-phospho-beta-D-ribosyl)glycinamide site.

This sequence belongs to the PurK/PurT family. As to quaternary structure, homodimer.

The enzyme catalyses N(1)-(5-phospho-beta-D-ribosyl)glycinamide + formate + ATP = N(2)-formyl-N(1)-(5-phospho-beta-D-ribosyl)glycinamide + ADP + phosphate + H(+). It participates in purine metabolism; IMP biosynthesis via de novo pathway; N(2)-formyl-N(1)-(5-phospho-D-ribosyl)glycinamide from N(1)-(5-phospho-D-ribosyl)glycinamide (formate route): step 1/1. In terms of biological role, involved in the de novo purine biosynthesis. Catalyzes the transfer of formate to 5-phospho-ribosyl-glycinamide (GAR), producing 5-phospho-ribosyl-N-formylglycinamide (FGAR). Formate is provided by PurU via hydrolysis of 10-formyl-tetrahydrofolate. This is Formate-dependent phosphoribosylglycinamide formyltransferase from Bordetella pertussis (strain Tohama I / ATCC BAA-589 / NCTC 13251).